The following is a 310-amino-acid chain: Methionyl-tRNA formyltransferase (310 aa).

111–114 (SLLP) provides a ligand contact to (6S)-5,6,7,8-tetrahydrofolate.

The protein belongs to the Fmt family.

The enzyme catalyses L-methionyl-tRNA(fMet) + (6R)-10-formyltetrahydrofolate = N-formyl-L-methionyl-tRNA(fMet) + (6S)-5,6,7,8-tetrahydrofolate + H(+). Attaches a formyl group to the free amino group of methionyl-tRNA(fMet). The formyl group appears to play a dual role in the initiator identity of N-formylmethionyl-tRNA by promoting its recognition by IF2 and preventing the misappropriation of this tRNA by the elongation apparatus. The chain is Methionyl-tRNA formyltransferase from Nitrobacter hamburgensis (strain DSM 10229 / NCIMB 13809 / X14).